We begin with the raw amino-acid sequence, 218 residues long: 7-cyano-7-deazaguanine synthase (218 aa).

Residue 9–19 (FSGGMDSFTVL) coordinates ATP. The Zn(2+) site is built by Cys185, Cys193, Cys196, and Cys199.

Belongs to the QueC family. Zn(2+) is required as a cofactor.

The catalysed reaction is 7-carboxy-7-deazaguanine + NH4(+) + ATP = 7-cyano-7-deazaguanine + ADP + phosphate + H2O + H(+). It functions in the pathway purine metabolism; 7-cyano-7-deazaguanine biosynthesis. Its function is as follows. Catalyzes the ATP-dependent conversion of 7-carboxy-7-deazaguanine (CDG) to 7-cyano-7-deazaguanine (preQ(0)). This is 7-cyano-7-deazaguanine synthase from Pseudoalteromonas atlantica (strain T6c / ATCC BAA-1087).